Consider the following 525-residue polypeptide: GMP synthase [glutamine-hydrolyzing] (525 aa).

The 199-residue stretch at 9 to 207 (RILILDFGSQ…VRDICQCEAL (199 aa)) folds into the Glutamine amidotransferase type-1 domain. Catalysis depends on cysteine 86, which acts as the Nucleophile. Catalysis depends on residues histidine 181 and glutamate 183. In terms of domain architecture, GMPS ATP-PPase spans 208–400 (WTPAKIIDDA…LGLPYDMLYR (193 aa)). Residue 235–241 (SGGVDSS) participates in ATP binding.

As to quaternary structure, homodimer.

The enzyme catalyses XMP + L-glutamine + ATP + H2O = GMP + L-glutamate + AMP + diphosphate + 2 H(+). It functions in the pathway purine metabolism; GMP biosynthesis; GMP from XMP (L-Gln route): step 1/1. Functionally, catalyzes the synthesis of GMP from XMP. This Escherichia coli (strain K12 / MC4100 / BW2952) protein is GMP synthase [glutamine-hydrolyzing].